The chain runs to 635 residues: Sodium- and chloride-dependent creatine transporter 1 (635 aa).

The segment covering 1–11 has biased composition (polar residues); that stretch reads MANKSTENGIY. Positions 1–27 are disordered; sequence MANKSTENGIYSVSGEEKKGPLIAPGP. At 1 to 60 the chain is on the cytoplasmic side; the sequence is MANKSTENGIYSVSGEEKKGPLIAPGPDGAPAKGDGPAALGAPGSLLAVPPRETWTRQMD. Residues 61-81 traverse the membrane as a helical segment; the sequence is FIMSCVGFAVGLGNVWRFPYL. The Extracellular segment spans residues 82–87; it reads CYKNGG. A helical transmembrane segment spans residues 88-108; the sequence is GVFLIPYILIALIGGIPIFFL. At 109–138 the chain is on the cytoplasmic side; that stretch reads EISLGQFMKAGSINVWNICPLFKGLGYASM. Residues 139–159 traverse the membrane as a helical segment; it reads VIVFYCNTYYIMVLAWGFYYL. Over 160 to 230 the chain is Extracellular; it reads VKSFTTTLPW…LSEGLEVPGA (71 aa). 2 N-linked (GlcNAc...) asparagine glycosylation sites follow: asparagine 192 and asparagine 197. Residues 231 to 251 form a helical membrane-spanning segment; the sequence is LNWEVTLCLLTCWVLVYFCVW. Residues 252–269 are Cytoplasmic-facing; that stretch reads KGVKSTGKIVYFTATFPY. A helical membrane pass occupies residues 270 to 290; it reads VVLVVLLVRGVLLPGALDGII. Residues 291–304 are Extracellular-facing; sequence YYLKPDWSKLASPQ. Residues 305-325 traverse the membrane as a helical segment; that stretch reads VWIDAGTQIFFSYAIGLGALT. Over 326 to 341 the chain is Cytoplasmic; sequence ALGSYNRFNNNCYKDA. The chain crosses the membrane as a helical span at residues 342 to 362; that stretch reads IILALINSGTSFFAGFVVFSI. Residues 363 to 394 are Extracellular-facing; sequence LGFMATEQGVHISKVAESGPGLAFIAYPRAVT. A helical transmembrane segment spans residues 395–415; the sequence is LMPVAPLWAALFFFMLLLLGL. Residues 416–444 are Cytoplasmic-facing; sequence DSQFVGVEGFITGLLDLLPASYYFRFQRE. The chain crosses the membrane as a helical span at residues 445–465; that stretch reads ISVALCCTICFVIDLSMVTDG. Residues 466 to 479 lie on the Extracellular side of the membrane; the sequence is GMYVFQLFDYYSAS. The chain crosses the membrane as a helical span at residues 480–500; sequence GTTLLWQAFWECVVVAWVYGA. At 501–520 the chain is on the cytoplasmic side; it reads DRFMDDVACMIGYRPCPWMK. Residues 521–541 form a helical membrane-spanning segment; that stretch reads WCWSFFTPLVCMGIFIFNVVY. Residues 542 to 560 lie on the Extracellular side of the membrane; sequence HEPLVYNNTYVYPWWGEAV. A glycan (N-linked (GlcNAc...) asparagine) is linked at asparagine 548. A helical membrane pass occupies residues 561–581; that stretch reads GWAFALSSMLCVPLHLLGCLL. At 582 to 635 the chain is on the cytoplasmic side; the sequence is RAKGTMAERWQHLTQPIWGLHHLEYRAQDSDVRGLTTLTPVSESSKVVVVESVM. Residues threonine 617 and threonine 620 each carry the phosphothreonine modification. Phosphoserine is present on serine 623.

The protein belongs to the sodium:neurotransmitter symporter (SNF) (TC 2.A.22) family. SLC6A8 subfamily. In terms of processing, glycosylated.

Its subcellular location is the cell membrane. It is found in the apical cell membrane. The catalysed reaction is creatine(out) + chloride(out) + 2 Na(+)(out) = creatine(in) + chloride(in) + 2 Na(+)(in). Creatine:sodium symporter which mediates the uptake of creatine. Plays an important role in supplying creatine to the brain via the blood-brain barrier. The chain is Sodium- and chloride-dependent creatine transporter 1 (SLC6A8) from Bos taurus (Bovine).